Reading from the N-terminus, the 245-residue chain is Thymidylate kinase (245 aa).

55 to 62 is an ATP binding site; the sequence is GIDGVGKS.

This sequence belongs to the thymidylate kinase family.

It carries out the reaction dTMP + ATP = dTDP + ADP. In terms of biological role, phosphorylation of dTMP to form dTDP in both de novo and salvage pathways of dTTP synthesis. This chain is Thymidylate kinase, found in Rhodopirellula baltica (strain DSM 10527 / NCIMB 13988 / SH1).